We begin with the raw amino-acid sequence, 213 residues long: Heterochromatin protein 1 (213 aa).

Disordered stretches follow at residues 1 to 24 (MGKK…EEEY) and 74 to 151 (RKDE…TGFD). Positions 24–82 (YAVEKILDRRVRKGKVEYYLKWKGYAETENTWEPEGNLDCQDLIQQYELSRKDEANAAA) constitute a Chromo 1 domain. A compositionally biased stretch (basic and acidic residues) spans 89 to 104 (SKKERPGSSTKVKETG). The segment covering 105-115 (RTSTTASNSSG) has biased composition (polar residues). One can recognise a Chromo 2 domain in the interval 154-212 (LEAEKILGASDNNGRLTFLIQFKGVDQAEMVPSTVANVKIPQMVIRFYEERLSWYSDNE).

The protein resides in the nucleus. Functionally, structural component of heterochromatin, involved in gene repression and the modification of position-effect-variegation. Recognizes and binds histone H3 tails methylated at 'Lys-9', leading to epigenetic repression. This Drosophila virilis (Fruit fly) protein is Heterochromatin protein 1 (HP1A).